Consider the following 207-residue polypeptide: MTSRKKVLLKVIILGDSGVGKTSLMNQYVNKKFSNQYKATIGADFLTKEVMVDDRLVTMQIWDTAGQERFQSLGVAFYRGADCCVLVFDVTAPNTFKTLDSWRDEFLIQASPRDPENFPFVVLGNKIDLENRQVTTKRAQAWCQSKNNIPYFETSAKEAINVEQAFQTIARNALKQETEVELYNEFPEPIKLDRNERAKPSAETCSC.

Residues 15–22 (GDSGVGKT), 34–40 (SNQYKAT), 63–67 (DTAGQ), 125–128 (NKID), and 156–157 (AK) each bind GTP. The Effector region signature appears at 37-45 (YKATIGADF). Residues Cys-205 and Cys-207 are each lipidated (S-geranylgeranyl cysteine). Cys-207 carries the cysteine methyl ester modification.

It belongs to the small GTPase superfamily. Rab family. (Microbial infection) Interacts with Singapore grouper iridoviral proteins VP69 (ORF69) and VP101 (ORF101). In terms of tissue distribution, ubiquitously expressed. Expressed in liver, spleen, kidney, brain, intestine, heart, skin, muscle, gill and stomach.

Its subcellular location is the late endosome membrane. It localises to the lysosome membrane. In terms of biological role, key regulator in endo-lysosomal trafficking. Governs early-to-late endosomal maturation, microtubule minus-end as well as plus-end directed endosomal migration and positioning, and endosome-lysosome transport through different protein-protein interaction cascades. Plays important roles in microbial pathogen infection and survival, as well as in participating in the life cycle of viruses. The sequence is that of Ras-related protein rab7 from Epinephelus coioides (Orange-spotted grouper).